We begin with the raw amino-acid sequence, 929 residues long: Ribonucleoside-diphosphate reductase large chain (929 aa).

An ATP-cone domain is found at 1–92; the sequence is MYVKKRDGRQ…VSNLHKQTKK (92 aa). ATP-binding positions include 5 to 6, 11 to 17, threonine 53, and aspartate 57; these read KR and ERVQFDK. Residues serine 202 and serine 217 each coordinate GDP. Cysteine 218 and cysteine 444 are disulfide-bonded. DTTP contacts are provided by residues 226-228, lysine 243, arginine 256, and 263-264; these read DSI and AG. GDP is bound at residue asparagine 427. Asparagine 427 serves as the catalytic Proton acceptor. Cysteine 429 acts as the Cysteine radical intermediate in catalysis. GDP is bound by residues glutamate 431 and 605 to 608; that span reads TAST. Catalysis depends on glutamate 431, which acts as the Proton acceptor. The tract at residues 789–904 is disordered; sequence ENTSGPRPYA…RDENIYSNAP (116 aa). Over residues 800 to 809 the composition is skewed to polar residues; that stretch reads TGVSGTSTPI. Residues 868 to 884 show a composition bias toward basic and acidic residues; the sequence is VKTEDIGSPLLERKEGQ. A compositionally biased stretch (acidic residues) spans 885–894; sequence NEDVDEDSQE.

Belongs to the ribonucleoside diphosphate reductase large chain family.

The enzyme catalyses a 2'-deoxyribonucleoside 5'-diphosphate + [thioredoxin]-disulfide + H2O = a ribonucleoside 5'-diphosphate + [thioredoxin]-dithiol. Its activity is regulated as follows. Under complex allosteric control mediated by deoxynucleoside triphosphates and ATP binding to separate specificity and activation sites on the large subunit. The type of nucleotide bound at the specificity site determines substrate preference. It seems probable that ATP makes the enzyme reduce CDP and UDP, dGTP favors ADP reduction and dTTP favors GDP reduction. Stimulated by ATP and inhibited by dATP binding to the activity site. Its function is as follows. Provides the precursors necessary for DNA synthesis. Catalyzes the biosynthesis of deoxyribonucleotides from the corresponding ribonucleotides. This is Ribonucleoside-diphosphate reductase large chain (rnr-1) from Neurospora crassa (strain ATCC 24698 / 74-OR23-1A / CBS 708.71 / DSM 1257 / FGSC 987).